The sequence spans 190 residues: Segregation and condensation protein B (190 aa).

This sequence belongs to the ScpB family. As to quaternary structure, homodimer. Homodimerization may be required to stabilize the binding of ScpA to the Smc head domains. Component of a cohesin-like complex composed of ScpA, ScpB and the Smc homodimer, in which ScpA and ScpB bind to the head domain of Smc. The presence of the three proteins is required for the association of the complex with DNA.

The protein resides in the cytoplasm. Participates in chromosomal partition during cell division. May act via the formation of a condensin-like complex containing Smc and ScpA that pull DNA away from mid-cell into both cell halves. The protein is Segregation and condensation protein B of Ruminiclostridium cellulolyticum (strain ATCC 35319 / DSM 5812 / JCM 6584 / H10) (Clostridium cellulolyticum).